The primary structure comprises 363 residues: Glutamate 5-kinase (363 aa).

Lys-6 contributes to the ATP binding site. 3 residues coordinate substrate: Ser-46, Asp-133, and Asn-145. ATP contacts are provided by residues 165-166 (TD) and 207-213 (TGGMHTK). The 79-residue stretch at 271–349 (TGRLLLDEGA…RDIEAVLGFT (79 aa)) folds into the PUA domain.

The protein belongs to the glutamate 5-kinase family.

The protein localises to the cytoplasm. It catalyses the reaction L-glutamate + ATP = L-glutamyl 5-phosphate + ADP. The protein operates within amino-acid biosynthesis; L-proline biosynthesis; L-glutamate 5-semialdehyde from L-glutamate: step 1/2. Functionally, catalyzes the transfer of a phosphate group to glutamate to form L-glutamate 5-phosphate. This is Glutamate 5-kinase from Deinococcus geothermalis (strain DSM 11300 / CIP 105573 / AG-3a).